Reading from the N-terminus, the 178-residue chain is Inorganic pyrophosphatase (178 aa).

The substrate site is built by Lys30, Arg44, and Tyr56. 3 residues coordinate Mg(2+): Asp66, Asp71, and Asp103. Residue Tyr142 participates in substrate binding.

The protein belongs to the PPase family. Homohexamer. Mg(2+) serves as cofactor.

The protein localises to the cytoplasm. The enzyme catalyses diphosphate + H2O = 2 phosphate + H(+). In terms of biological role, catalyzes the hydrolysis of inorganic pyrophosphate (PPi) forming two phosphate ions. The chain is Inorganic pyrophosphatase from Xylella fastidiosa (strain 9a5c).